The following is a 269-amino-acid chain: Ribonuclease HII (269 aa).

The 191-residue stretch at 79 to 269 (TYLAGADEVG…SFLKNILNTF (191 aa)) folds into the RNase H type-2 domain. A divalent metal cation contacts are provided by Asp-85, Glu-86, and Asp-182.

Belongs to the RNase HII family. It depends on Mn(2+) as a cofactor. The cofactor is Mg(2+).

The protein resides in the cytoplasm. The enzyme catalyses Endonucleolytic cleavage to 5'-phosphomonoester.. Its function is as follows. Endonuclease that specifically degrades the RNA of RNA-DNA hybrids. The polypeptide is Ribonuclease HII (Clostridium novyi (strain NT)).